A 602-amino-acid polypeptide reads, in one-letter code: MHSKVTIICIRFLFWFLLLCMLIGKSHTEDDIIIATKNGKVRGMNLTVFGGTVTAFLGIPYAQPPLGRLRFKKPQSLTKWSDIWNATKYANSCCQNIDQSFPGFHGSEMWNPNTDLSEDCLYLNVWIPAPKPKNATVLIWIYGGGFQTGTSSLHVYDGKFLARVERVIVVSMNYRVGALGFLALPGNPEAPGNMGLFDQQLALQWVQKNIAAFGGNPKSVTLFGESAGAASVSLHLLSPGSHSLFTRAILQSGSFNAPWAVTSLYEARNRTLNLAKLTGCSRENETEIIKCLRNKDPQEILLNEAFVVPYGTPLSVNFGPTVDGDFLTDMPDILLELGQFKKTQILVGVNKDEGTAFLVYGAPGFSKDNNSIITRKEFQEGLKIFFPGVSEFGKESILFHYTDWVDDQRPENYREALGDVVGDYNFICPALEFTKKFSEWGNNAFFYYFEHRSSKLPWPEWMGVMHGYEIEFVFGLPLERRDNYTKAEEILSRSIVKRWANFAKYGNPNETQNNSTSWPVFKSTEQKYLTLNTESTRIMTKLRAQQCRFWTSFFPKVLEMTGNIDEAEWEWKAGFHRWNNYMMDWKNQFNDYTSKKESCVGL.

The N-terminal stretch at 1–28 (MHSKVTIICIRFLFWFLLLCMLIGKSHT) is a signal peptide. N-linked (GlcNAc...) (complex) asparagine glycans are attached at residues N45 and N85. A disulfide bridge connects residues C93 and C120. Residue W110 coordinates tacrine. An N-linked (GlcNAc...) (complex) asparagine glycan is attached at N134. 144-145 (GG) serves as a coordination point for substrate. S226 (acyl-ester intermediate) is an active-site residue. At S226 the chain carries Phosphoserine. Residues N269 and N284 are each glycosylated (N-linked (GlcNAc...) (complex) asparagine). A disulfide bridge connects residues C280 and C291. The active-site Charge relay system is E353. An N-linked (GlcNAc...) (complex) asparagine glycan is attached at N369. C428 and C547 are oxidised to a cystine. H466 contacts tacrine. The Charge relay system role is filled by H466. The N-linked (GlcNAc...) (complex) asparagine glycan is linked to N483. N-linked (GlcNAc...) asparagine glycans are attached at residues N509, N513, and N514.

It belongs to the type-B carboxylesterase/lipase family. As to quaternary structure, homotetramer; disulfide-linked. Dimer of dimers. Post-translationally, N-glycosylated. No other PTM detected. The major N-glycan structures are of the complex diantennary type with 1 and 2 N-acetylneuraminic acid molecules (Neu5Ac) making up approximately 33% and 47% of the total N-glycans, respectively. Only low amounts of fucosylated diantennary N-glycans are detected (approximately 2%). Triantennary N-glycans with or without fucose amount to approximately 13%, whereas 5% of the total N-glycans are of the oligomannosidic or hybrid type. In terms of tissue distribution, detected in blood plasma (at protein level). Present in most cells except erythrocytes.

It localises to the secreted. The enzyme catalyses an acylcholine + H2O = a carboxylate + choline + H(+). Inhibited by mercury. Inhibited by Tabun. Tabun forms a covalent adduct with Ser-226 that becomes irreversible upon aging. Functionally, esterase with broad substrate specificity. Contributes to the inactivation of the neurotransmitter acetylcholine. Can degrade neurotoxic organophosphate esters. The protein is Cholinesterase (BCHE) of Homo sapiens (Human).